Consider the following 98-residue polypeptide: MLDIQTHMDFAGQGKAERWSRFIITFFGIVGLVYGAFVQQFSQTVYILGAGFVLSSLITIPPWPLYRRNALKWQKPIDTDAKSSSSESGDEGKKKKKQ.

Topologically, residues 1–18 (MLDIQTHMDFAGQGKAER) are cytoplasmic. The chain crosses the membrane as a helical span at residues 19–38 (WSRFIITFFGIVGLVYGAFV). The Lumenal segment spans residues 39–42 (QQFS). The chain crosses the membrane as a helical span at residues 43-65 (QTVYILGAGFVLSSLITIPPWPL). At 66–98 (YRRNALKWQKPIDTDAKSSSSESGDEGKKKKKQ) the chain is on the cytoplasmic side. Positions 78 to 98 (DTDAKSSSSESGDEGKKKKKQ) are disordered. Residues Ser84, Ser85, Ser86, and Ser88 each carry the phosphoserine modification.

It belongs to the SPCS1 family. As to quaternary structure, component of the signal peptidase complex (SPC) composed of a catalytic subunit twr/SEC11 and three accessory subunits Spase12/SPCS1, Spase25/SPCS2 and Spase22-23/SPCS3. The complex induces a local thinning of the ER membrane which is used to measure the length of the signal peptide (SP) h-region of protein substrates. This ensures the selectivity of the complex towards h-regions shorter than 18-20 amino acids.

It localises to the endoplasmic reticulum membrane. Its function is as follows. Component of the signal peptidase complex (SPC) which catalyzes the cleavage of N-terminal signal sequences from nascent proteins as they are translocated into the lumen of the endoplasmic reticulum. Dispensable for SPC enzymatic activity. (Microbial infection) Plays an important role in infection by flaviviruses such as West Nile virus and Dengue virus type 2. This Drosophila melanogaster (Fruit fly) protein is Signal peptidase complex subunit 1 (Spase12).